A 351-amino-acid chain; its full sequence is UDP-N-acetylenolpyruvoylglucosamine reductase (351 aa).

The FAD-binding PCMH-type domain maps to 11 to 213 (GVGGSIACFI…KQVRDQVLRI (203 aa)). Arginine 158 is an active-site residue. The active-site Proton donor is serine 239. Glutamate 343 is an active-site residue.

This sequence belongs to the MurB family. FAD is required as a cofactor.

Its subcellular location is the cytoplasm. It catalyses the reaction UDP-N-acetyl-alpha-D-muramate + NADP(+) = UDP-N-acetyl-3-O-(1-carboxyvinyl)-alpha-D-glucosamine + NADPH + H(+). It participates in cell wall biogenesis; peptidoglycan biosynthesis. Functionally, cell wall formation. The chain is UDP-N-acetylenolpyruvoylglucosamine reductase from Tropheryma whipplei (strain Twist) (Whipple's bacillus).